We begin with the raw amino-acid sequence, 287 residues long: mRNA-capping enzyme small subunit (287 aa).

As to quaternary structure, heterodimer of a large and a small subunit.

The protein localises to the virion. It carries out the reaction a 5'-end (5'-triphosphoguanosine)-ribonucleoside in mRNA + S-adenosyl-L-methionine = a 5'-end (N(7)-methyl 5'-triphosphoguanosine)-ribonucleoside in mRNA + S-adenosyl-L-homocysteine. Its function is as follows. Catalyzes the last reaction in the mRNA cap formation pathway. This Sus scrofa (Pig) protein is mRNA-capping enzyme small subunit.